A 241-amino-acid polypeptide reads, in one-letter code: Sugar fermentation stimulation protein homolog (241 aa).

This sequence belongs to the SfsA family.

This chain is Sugar fermentation stimulation protein homolog, found in Nostoc sp. (strain PCC 7120 / SAG 25.82 / UTEX 2576).